A 408-amino-acid chain; its full sequence is Pleckstrin homology domain-containing family O member 1 (408 aa).

A disordered region spans residues 1 to 21; the sequence is MKKSGSGKRGPPDGNHQSAAP. The PH domain maps to 20 to 131; sequence APEKVGWVRK…WINALSSAIT (112 aa). Positions 132-192 are interaction with capping proteins (CPs); the sequence is RAKNRILDEV…MLTLDLIQEE (61 aa). Residues 135-307 are interaction with ATM, CKIP, IFP35 and NMI; it reads NRILDEVTVE…PAQPGQLSRI (173 aa). A disordered region spans residues 217-264; the sequence is LAGSRRRADSDRIQPSSQRASSLSRPWEKPDKGAPYTPQALKKFPSTE. Serine 226 bears the Phosphoserine mark. Positions 229 to 240 are enriched in polar residues; it reads IQPSSQRASSLS. Residues serine 270 and serine 341 each carry the phosphoserine modification. Residues 307-408 form a negative regulator of AP-1 activity region; the sequence is IQDLVARKLE…QHSQYRKSLM (102 aa). Disordered regions lie at residues 325–348 and 389–408; these read VQGLGDGKRKAKDPPQSPPDSESE and TPDSHLRQTSQHSQYRKSLM. Residues 389–401 are compositionally biased toward polar residues; the sequence is TPDSHLRQTSQHS.

As to quaternary structure, heterodimer or homodimer. Interacts with CK2 and actin capping subunits (capping protein CP-alpha and CP-beta). CKIP1 and CK2 together inhibit the activity of actin capping protein at the barbed ends of actin filaments. Interacts with ATM, IFP35, JUN, JUND, NMI and PI3K. Interacts with AKT1, AKT2 and AKT3 (each isozyme of PKB), PtdIns(3,5)P2, PtdIns(4,5)P2 and PtdIns(3,4,5)P2. Post-translationally, C-terminal fragments could be released during apoptosis via caspase-3-dependent cleavage.

It localises to the cell membrane. The protein resides in the nucleus. It is found in the cytoplasm. Its function is as follows. Plays a role in the regulation of the actin cytoskeleton through its interactions with actin capping protein (CP). May function to target CK2 to the plasma membrane thereby serving as an adapter to facilitate the phosphorylation of CP by protein kinase 2 (CK2). Appears to target ATM to the plasma membrane. Appears to also inhibit tumor cell growth by inhibiting AKT-mediated cell-survival. Also implicated in PI3K-regulated muscle differentiation, the regulation of AP-1 activity (plasma membrane bound AP-1 regulator that translocates to the nucleus) and the promotion of apoptosis induced by tumor necrosis factor TNF. When bound to PKB, it inhibits it probably by decreasing PKB level of phosphorylation. This Mus musculus (Mouse) protein is Pleckstrin homology domain-containing family O member 1 (Plekho1).